We begin with the raw amino-acid sequence, 619 residues long: Teichoic acid poly(ribitol-phosphate) polymerase (619 aa).

The protein belongs to the CDP-glycerol glycerophosphotransferase family.

It is found in the cell membrane. The catalysed reaction is 4-O-[1-D-ribitylphospho-(2R)-1-glycerylphospho]-N-acetyl-beta-D-mannosaminyl-(1-&gt;4)-N-acetyl-alpha-D-glucosaminyl di-trans,octa-cis-undecaprenyl diphosphate + n CDP-L-ribitol = 4-O-[(D-ribitylphospho)(n)-D-ribitylphospho-(2R)-glycerylphospho]-N-acetyl-beta-D-mannosaminyl-(1-&gt;4)-N-acetyl-alpha-D-glucosaminyl di-trans,octa-cis-undecaprenyl diphosphate + n CMP + n H(+). It participates in cell wall biogenesis; poly(ribitol phosphate) teichoic acid biosynthesis. Its function is as follows. Responsible for the polymerization of the main chain of the major teichoic acid by sequential transfer of ribitol phosphate units from CDP-ribitol to the glycerol phosphate attached to the disaccharide linkage unit. Synthesizes polymers of up to 40 ribitol phosphate units in length. This chain is Teichoic acid poly(ribitol-phosphate) polymerase (tarL), found in Bacillus spizizenii (strain ATCC 23059 / NRRL B-14472 / W23) (Bacillus subtilis subsp. spizizenii).